Reading from the N-terminus, the 260-residue chain is Small ribosomal subunit protein bS6 (260 aa).

Belongs to the bacterial ribosomal protein bS6 family.

Functionally, binds together with bS18 to 16S ribosomal RNA. The polypeptide is Small ribosomal subunit protein bS6 (Wolbachia sp. subsp. Brugia malayi (strain TRS)).